Reading from the N-terminus, the 308-residue chain is Glutathione synthetase (308 aa).

One can recognise an ATP-grasp domain in the interval 117–300 (KLLPLSFPKF…LERDCWDYFE (184 aa)). 143-198 (YAEYGDIVLKPLYDYGGNGVCRICGRADVGAISSAMVERYEAPLVAQQFIDDISSD) contacts ATP. Positions 271 and 273 each coordinate Mg(2+).

The protein belongs to the prokaryotic GSH synthase family. The cofactor is Mg(2+). It depends on Mn(2+) as a cofactor.

It catalyses the reaction gamma-L-glutamyl-L-cysteine + glycine + ATP = glutathione + ADP + phosphate + H(+). Its pathway is sulfur metabolism; glutathione biosynthesis; glutathione from L-cysteine and L-glutamate: step 2/2. The polypeptide is Glutathione synthetase (Anaplasma centrale).